A 334-amino-acid chain; its full sequence is Chorismatase (334 aa).

Substrate-binding residues include Tyr143, Arg150, Tyr203, and Arg216. Residue Glu328 is the Proton acceptor of the active site.

Belongs to the FkbO/Hyg5 family. As to quaternary structure, monomer.

The catalysed reaction is chorismate + H2O = (3R,4R)-3,4-dihydroxy-3,4-dihydrobenzoate + pyruvate. Functionally, involved in the biosynthesis of the macrocyclic amino acid-linked polyketides rapamycin which is a potent immunosuppressant that prevents T-cell proliferation through initial binding to the immunophilin FKBP12. Catalyzes the hydrolysis of chorismate via a 1,4-conjugate elimination of water to yield (4R,5R)-4,5-dihydroxycyclohexa-1,5-dienecarboxylic acid (DCDC). The protein is Chorismatase (rapK) of Streptomyces rapamycinicus (strain ATCC 29253 / DSM 41530 / NRRL 5491 / AYB-994) (Streptomyces hygroscopicus (strain ATCC 29253)).